Consider the following 405-residue polypeptide: Acetylornithine/succinyldiaminopimelate aminotransferase (405 aa).

Residues 107–108 (GA) and Phe-140 contribute to the pyridoxal 5'-phosphate site. Residue Arg-143 coordinates N(2)-acetyl-L-ornithine. A pyridoxal 5'-phosphate-binding site is contributed by 225–228 (DEVQ). At Lys-254 the chain carries N6-(pyridoxal phosphate)lysine. Residue Thr-282 participates in N(2)-acetyl-L-ornithine binding. Thr-283 contributes to the pyridoxal 5'-phosphate binding site.

The protein belongs to the class-III pyridoxal-phosphate-dependent aminotransferase family. ArgD subfamily. Homodimer. Pyridoxal 5'-phosphate serves as cofactor.

The protein resides in the cytoplasm. The enzyme catalyses N(2)-acetyl-L-ornithine + 2-oxoglutarate = N-acetyl-L-glutamate 5-semialdehyde + L-glutamate. It carries out the reaction N-succinyl-(2S,6S)-2,6-diaminopimelate + 2-oxoglutarate = (S)-2-succinylamino-6-oxoheptanedioate + L-glutamate. It functions in the pathway amino-acid biosynthesis; L-arginine biosynthesis; N(2)-acetyl-L-ornithine from L-glutamate: step 4/4. The protein operates within amino-acid biosynthesis; L-lysine biosynthesis via DAP pathway; LL-2,6-diaminopimelate from (S)-tetrahydrodipicolinate (succinylase route): step 2/3. Involved in both the arginine and lysine biosynthetic pathways. This Yersinia pestis protein is Acetylornithine/succinyldiaminopimelate aminotransferase.